We begin with the raw amino-acid sequence, 369 residues long: Putative 2-aminoethylphosphonate import ATP-binding protein PhnT (369 aa).

Positions Ile-19–Leu-250 constitute an ABC transporter domain. Gly-51–Thr-58 contacts ATP.

It belongs to the ABC transporter superfamily. 2-aminoethylphosphonate importer (TC 3.A.1.11.5) family.

It is found in the cell inner membrane. Functionally, probably part of the PhnSTUV complex (TC 3.A.1.11.5) involved in 2-aminoethylphosphonate import. Probably responsible for energy coupling to the transport system. The sequence is that of Putative 2-aminoethylphosphonate import ATP-binding protein PhnT (phnT) from Salmonella typhi.